A 357-amino-acid polypeptide reads, in one-letter code: Dihydroorotate dehydrogenase (quinone) (357 aa).

FMN contacts are provided by residues 65–69 and Thr-89; that span reads AGLDK. Lys-69 contributes to the substrate binding site. 114–118 contributes to the substrate binding site; it reads NRFGF. Residues Asn-156 and Asn-189 each contribute to the FMN site. Substrate is bound at residue Asn-189. Catalysis depends on Ser-192, which acts as the Nucleophile. Asn-194 contacts substrate. Positions 234 and 262 each coordinate FMN. 263–264 provides a ligand contact to substrate; it reads NT. FMN is bound by residues Gly-285, Gly-314, and 335–336; that span reads YT.

This sequence belongs to the dihydroorotate dehydrogenase family. Type 2 subfamily. Monomer. FMN serves as cofactor.

The protein localises to the cell membrane. It carries out the reaction (S)-dihydroorotate + a quinone = orotate + a quinol. The protein operates within pyrimidine metabolism; UMP biosynthesis via de novo pathway; orotate from (S)-dihydroorotate (quinone route): step 1/1. Its function is as follows. Catalyzes the conversion of dihydroorotate to orotate with quinone as electron acceptor. This is Dihydroorotate dehydrogenase (quinone) from Albidiferax ferrireducens (strain ATCC BAA-621 / DSM 15236 / T118) (Rhodoferax ferrireducens).